The following is a 154-amino-acid chain: Endoribonuclease YbeY (154 aa).

Positions 116, 120, and 126 each coordinate Zn(2+).

Belongs to the endoribonuclease YbeY family. The cofactor is Zn(2+).

The protein resides in the cytoplasm. Functionally, single strand-specific metallo-endoribonuclease involved in late-stage 70S ribosome quality control and in maturation of the 3' terminus of the 16S rRNA. This is Endoribonuclease YbeY from Chromohalobacter salexigens (strain ATCC BAA-138 / DSM 3043 / CIP 106854 / NCIMB 13768 / 1H11).